The chain runs to 656 residues: Mucin-20 (656 aa).

Positions 1 to 21 are cleaved as a signal peptide; sequence MGSVWGLAVPLLVFCWKVGVS. Polar residues-rich tracts occupy residues 85-96, 114-125, and 159-170; these read ATSISSEVNSRD, PAASSLEAQTTS, and TTSPAPSFLDTQ. Disordered stretches follow at residues 85-125, 159-232, and 329-348; these read ATSI…QTTS, TTSP…TQTI, and YLSSESSSSSDSSAGVLSSS. The span at 171 to 227 shows a compositional bias: low complexity; the sequence is TTSPEPSSLTTSPAPSSLITSPTPSSLTTSPAPSFLDTQTTSPAPSSLTTSPAPSSL. A run of 5 repeats spans residues 180-188, 189-197, 198-206, 210-218, and 219-227. Residues 180 to 227 form an approximate repeats region; it reads TTSPAPSSLITSPTPSSLTTSPAPSFLDTQTTSPAPSSLTTSPAPSSL. N-linked (GlcNAc...) asparagine glycans are attached at residues asparagine 366 and asparagine 570. The tract at residues 399–603 is involved in oligomerization; it reads TAALFTSEIL…WIRKTTKHDP (205 aa). Positions 560-573 are enriched in polar residues; that stretch reads STTASTSKNPNITL. Residues 560–592 are disordered; sequence STTASTSKNPNITLTKTTASPKPPTHPTTSAST. The tract at residues 604 to 656 is interaction with MET; sequence GEDGGFLLVRLTVASPKDLTEHNAREKLMNQLRRELHARMPLVHMSFLSIRRG.

In terms of assembly, interacts with MET; oligomerization increases affinity for MET. Highly expressed in kidney. Up-regulated in renal tissues during renal injury.

The protein resides in the secreted. It is found in the apical cell membrane. It localises to the basolateral cell membrane. Its subcellular location is the cell projection. The protein localises to the microvillus membrane. Functionally, may regulate MET signaling cascade. Seems to decrease hepatocyte growth factor (HGF)-induced transient MAPK activation. Blocks GRB2 recruitment to MET thus suppressing the GRB2-RAS pathway. Inhibits HGF-induced proliferation of MMP1 and MMP9 expression. In Mus musculus (Mouse), this protein is Mucin-20 (Muc20).